The primary structure comprises 334 residues: L-lactate dehydrogenase B chain (334 aa).

A2 carries the N-acetylalanine modification. K7 bears the N6-acetyllysine mark. S44 is modified (phosphoserine). Residues 53–58 (DVLEDK) and R100 contribute to the NAD(+) site. An N6-acetyllysine modification is found at K58. R107 contributes to the substrate binding site. The residue at position 119 (K119) is an N6-acetyllysine. N139 is a binding site for NAD(+). Positions 139 and 170 each coordinate substrate. The active-site Proton acceptor is the H194. A Phosphotyrosine modification is found at Y240. Substrate is bound at residue T249. K329 is subject to N6-acetyllysine.

Belongs to the LDH/MDH superfamily. LDH family. As to quaternary structure, homotetramer. Interacts with PTEN upstream reading frame protein MP31; the interaction leads to inhibition of mitochondrial lactate dehydrogenase activity, preventing conversion of lactate to pyruvate in mitochondria.

It is found in the cytoplasm. Its subcellular location is the mitochondrion inner membrane. The enzyme catalyses (S)-lactate + NAD(+) = pyruvate + NADH + H(+). Its pathway is fermentation; pyruvate fermentation to lactate; (S)-lactate from pyruvate: step 1/1. Functionally, interconverts simultaneously and stereospecifically pyruvate and lactate with concomitant interconversion of NADH and NAD(+). The chain is L-lactate dehydrogenase B chain (LDHB) from Monodelphis domestica (Gray short-tailed opossum).